Here is a 200-residue protein sequence, read N- to C-terminus: Peptidyl-tRNA hydrolase (200 aa).

TRNA is bound at residue Tyr16. His21 acts as the Proton acceptor in catalysis. Positions 67, 69, and 115 each coordinate tRNA.

Belongs to the PTH family. Monomer.

It localises to the cytoplasm. It carries out the reaction an N-acyl-L-alpha-aminoacyl-tRNA + H2O = an N-acyl-L-amino acid + a tRNA + H(+). Its function is as follows. Hydrolyzes ribosome-free peptidyl-tRNAs (with 1 or more amino acids incorporated), which drop off the ribosome during protein synthesis, or as a result of ribosome stalling. Functionally, catalyzes the release of premature peptidyl moieties from peptidyl-tRNA molecules trapped in stalled 50S ribosomal subunits, and thus maintains levels of free tRNAs and 50S ribosomes. This is Peptidyl-tRNA hydrolase from Prochlorococcus marinus (strain AS9601).